We begin with the raw amino-acid sequence, 441 residues long: MPYFDNISTIAYEGPASKNPLAFKFYNPEEKVGDKTMEEHLRFSVAYWHTFTGDGSDPFGAGNMIRPWNKYSGMDLAKARVEAAFEFFEKLNIPFFCFHDVDIAPEGETLKETYKNLDIIVDMIEEYMKTSKTKLLWNTANLFTHPRFVHGAATSCNADVFAYAAAKVKKGLEIAKRLGAENYVFWGGREGYETLLNTDMKLELDNLARFLHMAVDYAKEIGFDGQFLIEPKPKEPTKHQYDFDVATALAFLQTYGLKDYFKFNIEANHATLAGHTFEHELRVARIHGMLGSVDANQGDMLLGWDTDEFPTDLYSTTLAMYEILKNGGLGRGGLNFDAKVRRGSFEPEDLFYAHIAGMDSFAVGLKVAHRLIEDRVFDEFIEERYKSYTEGIGREIVEGTVDFHKLEAHALQLGEIQNQSGRQERLKTLLNQYLLEVCAAR.

Residues histidine 99 and aspartate 102 contribute to the active site. Mg(2+)-binding residues include glutamate 230, glutamate 266, histidine 269, aspartate 294, aspartate 305, aspartate 307, and aspartate 337.

Belongs to the xylose isomerase family. Homotetramer. Mg(2+) serves as cofactor.

It localises to the cytoplasm. The enzyme catalyses alpha-D-xylose = alpha-D-xylulofuranose. In terms of biological role, exhibits xylose isomerase activity. The protein is Xylose isomerase (xylA) of Bacillus sp. (strain LW2).